The primary structure comprises 610 residues: UvrABC system protein C (610 aa).

The region spanning 16–94 is the GIY-YIG domain; that stretch reads SQPGVYRMYD…IKLYQPRYNV (79 aa). The UVR domain occupies 204-239; it reads DQVLTQLIARMEKASQDLAFEEAARIRDQIQAVRRV.

Belongs to the UvrC family. Interacts with UvrB in an incision complex.

The protein localises to the cytoplasm. The UvrABC repair system catalyzes the recognition and processing of DNA lesions. UvrC both incises the 5' and 3' sides of the lesion. The N-terminal half is responsible for the 3' incision and the C-terminal half is responsible for the 5' incision. In Salmonella typhi, this protein is UvrABC system protein C.